We begin with the raw amino-acid sequence, 241 residues long: Ribonuclease PH (241 aa).

Phosphate is bound by residues Arg87 and 125-127 (GTR).

This sequence belongs to the RNase PH family. Homohexameric ring arranged as a trimer of dimers.

It catalyses the reaction tRNA(n+1) + phosphate = tRNA(n) + a ribonucleoside 5'-diphosphate. Phosphorolytic 3'-5' exoribonuclease that plays an important role in tRNA 3'-end maturation. Removes nucleotide residues following the 3'-CCA terminus of tRNAs; can also add nucleotides to the ends of RNA molecules by using nucleoside diphosphates as substrates, but this may not be physiologically important. Probably plays a role in initiation of 16S rRNA degradation (leading to ribosome degradation) during starvation. The sequence is that of Ribonuclease PH from Dehalococcoides mccartyi (strain ATCC BAA-2100 / JCM 16839 / KCTC 5957 / BAV1).